A 356-amino-acid chain; its full sequence is Protein MGF 360-10L (356 aa).

An ANK repeat occupies 58–90; the sequence is DLNTALMIAAKENNYQLIKLFTEWGANINYGYI. An N-linked (GlcNAc...) asparagine; by host glycan is attached at Asn125. A run of 2 helical transmembrane segments spans residues 206 to 228 and 249 to 271; these read LNTW…YLYE and NFLT…LAAI. Residue Asn352 is glycosylated (N-linked (GlcNAc...) asparagine; by host).

It belongs to the asfivirus MGF 360 family.

Its subcellular location is the host membrane. Plays a role in virus cell tropism, and may be required for efficient virus replication in macrophages. The protein is Protein MGF 360-10L of Ornithodoros (relapsing fever ticks).